We begin with the raw amino-acid sequence, 468 residues long: Uronate isomerase (468 aa).

Belongs to the metallo-dependent hydrolases superfamily. Uronate isomerase family.

It carries out the reaction D-glucuronate = D-fructuronate. The enzyme catalyses aldehydo-D-galacturonate = keto-D-tagaturonate. Its pathway is carbohydrate metabolism; pentose and glucuronate interconversion. This chain is Uronate isomerase, found in Endomicrobium trichonymphae.